A 244-amino-acid polypeptide reads, in one-letter code: 1-(5-phosphoribosyl)-5-[(5-phosphoribosylamino)methylideneamino] imidazole-4-carboxamide isomerase (244 aa).

The active-site Proton acceptor is the Asp-10. The active-site Proton donor is the Asp-132.

Belongs to the HisA/HisF family.

Its subcellular location is the cytoplasm. It carries out the reaction 1-(5-phospho-beta-D-ribosyl)-5-[(5-phospho-beta-D-ribosylamino)methylideneamino]imidazole-4-carboxamide = 5-[(5-phospho-1-deoxy-D-ribulos-1-ylimino)methylamino]-1-(5-phospho-beta-D-ribosyl)imidazole-4-carboxamide. It participates in amino-acid biosynthesis; L-histidine biosynthesis; L-histidine from 5-phospho-alpha-D-ribose 1-diphosphate: step 4/9. This chain is 1-(5-phosphoribosyl)-5-[(5-phosphoribosylamino)methylideneamino] imidazole-4-carboxamide isomerase, found in Xanthomonas euvesicatoria pv. vesicatoria (strain 85-10) (Xanthomonas campestris pv. vesicatoria).